Here is a 147-residue protein sequence, read N- to C-terminus: Ribonuclease H (147 aa).

One can recognise an RNase H type-1 domain in the interval 1–142 (MTEIVEIFTD…ADALARSAIT (142 aa)). Mg(2+) contacts are provided by aspartate 10, glutamate 48, aspartate 70, and aspartate 134.

The protein belongs to the RNase H family. As to quaternary structure, monomer. It depends on Mg(2+) as a cofactor.

The protein localises to the cytoplasm. The enzyme catalyses Endonucleolytic cleavage to 5'-phosphomonoester.. In terms of biological role, endonuclease that specifically degrades the RNA of RNA-DNA hybrids. This is Ribonuclease H from Nitrosococcus oceani (strain ATCC 19707 / BCRC 17464 / JCM 30415 / NCIMB 11848 / C-107).